Reading from the N-terminus, the 38-residue chain is MKKTDKILKEIGIQRVAIMEGKKYSKGFMEDGDIGVQY.

As to quaternary structure, heterohexamer of 3 large and 3 small chains. The cofactor is pyruvate.

The catalysed reaction is L-histidine + H(+) = histamine + CO2. This chain is Histidine decarboxylase small chain, found in Micrococcus sp.